Consider the following 267-residue polypeptide: Tryptophan synthase alpha chain (267 aa).

Catalysis depends on proton acceptor residues glutamate 43 and aspartate 54.

The protein belongs to the TrpA family. In terms of assembly, tetramer of two alpha and two beta chains.

It carries out the reaction (1S,2R)-1-C-(indol-3-yl)glycerol 3-phosphate + L-serine = D-glyceraldehyde 3-phosphate + L-tryptophan + H2O. Its pathway is amino-acid biosynthesis; L-tryptophan biosynthesis; L-tryptophan from chorismate: step 5/5. Functionally, the alpha subunit is responsible for the aldol cleavage of indoleglycerol phosphate to indole and glyceraldehyde 3-phosphate. In Bacillus licheniformis (strain ATCC 14580 / DSM 13 / JCM 2505 / CCUG 7422 / NBRC 12200 / NCIMB 9375 / NCTC 10341 / NRRL NRS-1264 / Gibson 46), this protein is Tryptophan synthase alpha chain.